Consider the following 254-residue polypeptide: 4-hydroxy-tetrahydrodipicolinate reductase (254 aa).

7-12 (GASGRI) provides a ligand contact to NAD(+). Residue arginine 35 coordinates NADP(+). NAD(+)-binding positions include 91-93 (GTT) and 115-118 (AHNM). Residue histidine 147 is the Proton donor/acceptor of the active site. Histidine 148 is a (S)-2,3,4,5-tetrahydrodipicolinate binding site. The active-site Proton donor is lysine 151. 157–158 (GT) contributes to the (S)-2,3,4,5-tetrahydrodipicolinate binding site.

The protein belongs to the DapB family.

It is found in the cytoplasm. The catalysed reaction is (S)-2,3,4,5-tetrahydrodipicolinate + NAD(+) + H2O = (2S,4S)-4-hydroxy-2,3,4,5-tetrahydrodipicolinate + NADH + H(+). The enzyme catalyses (S)-2,3,4,5-tetrahydrodipicolinate + NADP(+) + H2O = (2S,4S)-4-hydroxy-2,3,4,5-tetrahydrodipicolinate + NADPH + H(+). Its pathway is amino-acid biosynthesis; L-lysine biosynthesis via DAP pathway; (S)-tetrahydrodipicolinate from L-aspartate: step 4/4. Its function is as follows. Catalyzes the conversion of 4-hydroxy-tetrahydrodipicolinate (HTPA) to tetrahydrodipicolinate. In Helicobacter pylori (strain Shi470), this protein is 4-hydroxy-tetrahydrodipicolinate reductase.